A 252-amino-acid chain; its full sequence is MKTVTVKDLVIGTGAPKIIVSLMAKDIARVKSEALAYREADFDILEWRVDHFADLSNVESVMAAAKILRETMPEKPLLFTFRSAKEGGEQAISTEAYIALNRAAIDSGLVDMIDLELFTGDDQVKETVACAHAHDVKVVMSNHDFHKTPEAEEIIARLRKMQSFDADIPKIALMPQSTSDVLTLLAATLEMQEQYADRPIITMSMAKTGVISRLAGEVFGSAATFGAVKKASAPGQISVNDLRTVLTILHQA.

Residues S21, 46-48 (EWR), and R82 contribute to the 3-dehydroquinate site. H143 functions as the Proton donor/acceptor in the catalytic mechanism. Catalysis depends on K170, which acts as the Schiff-base intermediate with substrate. 3-dehydroquinate contacts are provided by R213, S232, and Q236.

It belongs to the type-I 3-dehydroquinase family. As to quaternary structure, homodimer.

It carries out the reaction 3-dehydroquinate = 3-dehydroshikimate + H2O. Its pathway is metabolic intermediate biosynthesis; chorismate biosynthesis; chorismate from D-erythrose 4-phosphate and phosphoenolpyruvate: step 3/7. In terms of biological role, involved in the third step of the chorismate pathway, which leads to the biosynthesis of aromatic amino acids. Catalyzes the cis-dehydration of 3-dehydroquinate (DHQ) and introduces the first double bond of the aromatic ring to yield 3-dehydroshikimate. The chain is 3-dehydroquinate dehydratase from Shigella boydii serotype 4 (strain Sb227).